Reading from the N-terminus, the 562-residue chain is Dihydroxy-acid dehydratase (562 aa).

A Mg(2+)-binding site is contributed by aspartate 80. Cysteine 121 contributes to the [2Fe-2S] cluster binding site. Mg(2+) contacts are provided by aspartate 122 and lysine 123. Lysine 123 is modified (N6-carboxylysine). Position 194 (cysteine 194) interacts with [2Fe-2S] cluster. Glutamate 446 is a Mg(2+) binding site. The active-site Proton acceptor is the serine 472.

The protein belongs to the IlvD/Edd family. In terms of assembly, homodimer. Requires [2Fe-2S] cluster as cofactor. Mg(2+) is required as a cofactor.

The catalysed reaction is (2R)-2,3-dihydroxy-3-methylbutanoate = 3-methyl-2-oxobutanoate + H2O. It carries out the reaction (2R,3R)-2,3-dihydroxy-3-methylpentanoate = (S)-3-methyl-2-oxopentanoate + H2O. Its pathway is amino-acid biosynthesis; L-isoleucine biosynthesis; L-isoleucine from 2-oxobutanoate: step 3/4. It participates in amino-acid biosynthesis; L-valine biosynthesis; L-valine from pyruvate: step 3/4. In terms of biological role, functions in the biosynthesis of branched-chain amino acids. Catalyzes the dehydration of (2R,3R)-2,3-dihydroxy-3-methylpentanoate (2,3-dihydroxy-3-methylvalerate) into 2-oxo-3-methylpentanoate (2-oxo-3-methylvalerate) and of (2R)-2,3-dihydroxy-3-methylbutanoate (2,3-dihydroxyisovalerate) into 2-oxo-3-methylbutanoate (2-oxoisovalerate), the penultimate precursor to L-isoleucine and L-valine, respectively. The protein is Dihydroxy-acid dehydratase of Staphylococcus aureus (strain Mu50 / ATCC 700699).